The chain runs to 157 residues: Protein Smg homolog (157 aa).

This sequence belongs to the Smg family.

This chain is Protein Smg homolog, found in Aliivibrio fischeri (strain MJ11) (Vibrio fischeri).